The sequence spans 219 residues: Large ribosomal subunit protein uL1 (219 aa).

The protein belongs to the universal ribosomal protein uL1 family. Part of the 50S ribosomal subunit.

Probably involved in E site tRNA release. Binds directly to 23S rRNA. In terms of biological role, protein L1 is also a translational repressor protein, it controls the translation of its operon by binding to its mRNA. In Methanocaldococcus jannaschii (strain ATCC 43067 / DSM 2661 / JAL-1 / JCM 10045 / NBRC 100440) (Methanococcus jannaschii), this protein is Large ribosomal subunit protein uL1.